The following is a 150-amino-acid chain: Siroheme decarboxylase NirD subunit (150 aa).

The protein belongs to the Ahb/Nir family. In terms of assembly, probably forms a complex composed of NirD, NirL, NirG and NirH. All proteins are required for the total conversion of siroheme to didecarboxysiroheme.

The enzyme catalyses siroheme + 2 H(+) = 12,18-didecarboxysiroheme + 2 CO2. It functions in the pathway porphyrin-containing compound metabolism. In terms of biological role, involved in heme d1 biosynthesis. Catalyzes the decarboxylation of siroheme into didecarboxysiroheme. The polypeptide is Siroheme decarboxylase NirD subunit (Pseudomonas aeruginosa (strain ATCC 15692 / DSM 22644 / CIP 104116 / JCM 14847 / LMG 12228 / 1C / PRS 101 / PAO1)).